The following is a 364-amino-acid chain: B3 domain-containing protein At5g38490 (364 aa).

The disordered stretch occupies residues 148 to 202 (ASTSSSSLLNLPCLEPSTETKDVPNPNYQSSSPSSCLTGKTNRKRRAVEQRKSGK). Residues 260-364 (FQKLIRNDFL…GVLCFALDTE (105 aa)) constitute a DNA-binding region (TF-B3).

It localises to the nucleus. The polypeptide is B3 domain-containing protein At5g38490 (Arabidopsis thaliana (Mouse-ear cress)).